We begin with the raw amino-acid sequence, 2300 residues long: Adenylate cyclase (2300 aa).

Composition is skewed to polar residues over residues 1–21 and 28–41; these read MTRN…SSIT and TPTS…TRPL. 3 disordered regions span residues 1–256, 272–593, and 631–652; these read MTRN…GSFL, GIRP…DLTR, and TKLF…MDED. 2 stretches are compositionally biased toward low complexity: residues 42–61 and 92–152; these read SPSL…VSRS and SSQS…QVSP. A compositionally biased stretch (polar residues) spans 153–169; the sequence is TGGSRLTQSPTTPSNAS. Over residues 170 to 185 the composition is skewed to basic and acidic residues; the sequence is IREHRMSELGGYRREM. Residues 204-221 show a composition bias toward low complexity; the sequence is QQQPQQPQQQQQQQQQQQ. Over residues 228-237 the composition is skewed to polar residues; sequence VSGTFSNLSQ. Positions 303-313 are enriched in low complexity; that stretch reads SIASITTTASS. Over residues 333–344 the composition is skewed to basic and acidic residues; that stretch reads GDRDDWPGRDSS. The span at 345-357 shows a compositional bias: polar residues; it reads EISLPQPSHSGPM. The span at 410 to 421 shows a compositional bias: pro residues; sequence PSRPRTPVPAPE. The segment covering 455 to 469 has biased composition (polar residues); that stretch reads DSSQNPPKTSSSARS. Positions 484-501 are enriched in basic and acidic residues; it reads KSNEDPRALKPSLSREDS. Positions 511 to 550 are enriched in polar residues; it reads NGSSSMMGTRSRAQSPAPSWTGTSRGLKANSISDGTSSPA. The span at 552–565 shows a compositional bias: basic residues; it reads SHKKGILGRFRRHN. Residues 631–643 show a composition bias toward low complexity; it reads TKLFTSKKSSSAK. One can recognise a Ras-associating domain in the interval 749-841; sequence SNYYIRVFRS…IDEIGREDNS (93 aa). LRR repeat units lie at residues 867–890, 892–914, 915–938, 939–961, 962–986, 988–1008, 1009–1031, 1033–1055, 1056–1079, 1081–1097, 1098–1119, 1120–1142, 1143–1165, 1166–1188, 1189–1211, and 1213–1234; these read NQKL…LYRK, AEIV…FIQA, CTAL…FATA, SKLT…ELSK, LTGL…GAYK, LRTL…ICEL, ETIV…LMKL, NLEK…VRDL, VSLR…DLPR, EILS…SGSF, ERLR…KAPV, PTLK…IDNL, MNLE…IGNL, KKLD…IGCL, TELR…IWWA, and KLEH…ASRA. The interval 1228-1336 is disordered; that stretch reads PKPASRAPQA…VITPSNGPRK (109 aa). Residues 1253–1263 show a composition bias toward polar residues; the sequence is ANKNGLLSRTP. The span at 1313-1327 shows a compositional bias: low complexity; that stretch reads TSVVSRSTTQSSTGV. 6 LRR repeats span residues 1349-1369, 1373-1396, 1398-1420, 1422-1445, 1447-1469, and 1474-1497; these read SGSL…VFEE, LPEL…TIRS, PQLV…DFLE, HCLL…ISRA, KLQV…PYDW, and NRDL…YRQP. Residues 1552–1828 form the PPM-type phosphatase domain; that stretch reads PYGMADTLGK…NKLLIMMIGV (277 aa). Residues 1847 to 1867 are disordered; the sequence is FSMPQDDPSHVPPSGNKRRKV. The Guanylate cyclase domain occupies 1892-2029; it reads SIVFTDIKNS…PMVNKASRIS (138 aa). 2 residues coordinate Mg(2+): Asp1897 and Asp1940. The interval 2272–2300 is disordered; sequence LDQAETDDATDNNSSGDVDTLDGSDTEQE. Acidic residues predominate over residues 2290–2300; sequence DTLDGSDTEQE.

It belongs to the adenylyl cyclase class-4/guanylyl cyclase family. Mg(2+) serves as cofactor.

The enzyme catalyses ATP = 3',5'-cyclic AMP + diphosphate. Plays essential roles in regulation of cellular metabolism by catalyzing the synthesis of a second messenger, cAMP. This is Adenylate cyclase (cr-1) from Neurospora crassa (strain ATCC 24698 / 74-OR23-1A / CBS 708.71 / DSM 1257 / FGSC 987).